Reading from the N-terminus, the 334-residue chain is ADP-L-glycero-D-manno-heptose-6-epimerase (334 aa).

Residues 11–12 (FI), 32–33 (DN), K39, K54, 77–81 (QGACS), and N94 contribute to the NADP(+) site. The active-site Proton acceptor is the Y141. K145 is an NADP(+) binding site. N171 lines the substrate pocket. The NADP(+) site is built by V172 and K180. The Proton acceptor role is filled by K180. Substrate contacts are provided by residues R182, H189, 203-206 (FGSN), R216, and Y295.

This sequence belongs to the NAD(P)-dependent epimerase/dehydratase family. HldD subfamily. As to quaternary structure, homopentamer. NADP(+) is required as a cofactor.

The enzyme catalyses ADP-D-glycero-beta-D-manno-heptose = ADP-L-glycero-beta-D-manno-heptose. Its pathway is nucleotide-sugar biosynthesis; ADP-L-glycero-beta-D-manno-heptose biosynthesis; ADP-L-glycero-beta-D-manno-heptose from D-glycero-beta-D-manno-heptose 7-phosphate: step 4/4. Catalyzes the interconversion between ADP-D-glycero-beta-D-manno-heptose and ADP-L-glycero-beta-D-manno-heptose via an epimerization at carbon 6 of the heptose. This chain is ADP-L-glycero-D-manno-heptose-6-epimerase, found in Neisseria gonorrhoeae (strain ATCC 700825 / FA 1090).